Here is a 502-residue protein sequence, read N- to C-terminus: Protein adenylyltransferase Fic (502 aa).

The tract at residues 1 to 24 (MAMATGKATEEEQPEQGQQQQQLQ) is disordered. Low complexity predominate over residues 15–24 (EQGQQQQQLQ). The helical transmembrane segment at 38–60 (FALFFIAGCLAAFGFHALTSSSG) threads the bilayer. 2 TPR repeats span residues 122 to 155 (AMGA…APKH) and 156 to 190 (PEVL…NPSN). The Inhibitory (S/T)XXXE(G/N) motif motif lies at 247–252 (SVGIEG). ATP-binding positions include E251 and 332–335 (VGGH). Positions 301–436 (ITLKDILELH…IRPFVRFIAD (136 aa)) constitute a Fido domain. H379 is a catalytic residue. ATP-binding positions include 383–390 (DGNGRTSR), 415–416 (YY), and N423. A disordered region spans residues 478 to 502 (SPELYESGSGSGAGAGAGSGQKGMP). Over residues 486–502 (SGSGAGAGAGSGQKGMP) the composition is skewed to gly residues.

Belongs to the fic family. In terms of assembly, homodimer.

The protein resides in the membrane. The enzyme catalyses L-tyrosyl-[protein] + ATP = O-(5'-adenylyl)-L-tyrosyl-[protein] + diphosphate. It carries out the reaction L-threonyl-[protein] + ATP = 3-O-(5'-adenylyl)-L-threonyl-[protein] + diphosphate. The catalysed reaction is 3-O-(5'-adenylyl)-L-threonyl-[protein] + H2O = L-threonyl-[protein] + AMP + H(+). Its activity is regulated as follows. The side chain of Glu-251 determines which of the two opposing activities (AMPylase or de-AMPylase) will take place. In response to endoplasmic reticulum stress, mediates de-AMPylase activity. Adenylyltransferase activity is inhibited by the inhibitory helix present at the N-terminus: Glu-251 binds ATP and competes with ATP-binding at Arg-390, thereby preventing adenylyltransferase activity. In unstressed cells, disengagement of Glu-251 promotes adenylyltransferase activity. Activation dissociates ATP-binding from Glu-251, allowing ordered binding of the entire ATP moiety with the alpha-phosphate in an orientation that is productive for accepting an incoming target hydroxyl side chain. Protein that can both mediate the addition of adenosine 5'-monophosphate (AMP) to specific residues of target proteins (AMPylation), and the removal of the same modification from target proteins (de-AMPylation), depending on the context. The side chain of Glu-251 determines which of the two opposing activities (AMPylase or de-AMPylase) will take place. Acts as a key regulator of the unfolded protein response (UPR) by mediating AMPylation or de-AMPylation of Hsc70-3/BiP. In unstressed cells, acts as an adenylyltransferase by mediating AMPylation of Hsc70-3/BiP at 'Thr-518', thereby inactivating it. In response to endoplasmic reticulum stress, acts as a phosphodiesterase by mediating removal of ATP (de-AMPylation) from Hsc70-3/BiP at 'Thr-518', leading to restore HSPA5/BiP activity. This chain is Protein adenylyltransferase Fic, found in Drosophila mojavensis (Fruit fly).